A 308-amino-acid chain; its full sequence is Ferredoxin--NADP reductase (308 aa).

FAD-binding residues include glutamate 26, glutamine 34, tyrosine 39, valine 77, phenylalanine 106, aspartate 266, and threonine 306.

It belongs to the ferredoxin--NADP reductase type 2 family. As to quaternary structure, homodimer. FAD serves as cofactor.

It catalyses the reaction 2 reduced [2Fe-2S]-[ferredoxin] + NADP(+) + H(+) = 2 oxidized [2Fe-2S]-[ferredoxin] + NADPH. The chain is Ferredoxin--NADP reductase from Lactobacillus delbrueckii subsp. bulgaricus (strain ATCC 11842 / DSM 20081 / BCRC 10696 / JCM 1002 / NBRC 13953 / NCIMB 11778 / NCTC 12712 / WDCM 00102 / Lb 14).